The sequence spans 676 residues: WD repeat-containing protein 48 (676 aa).

A Phosphotyrosine modification is found at tyrosine 28. 8 WD repeats span residues 28 to 67 (YNRN…QDPY), 73 to 112 (HHTD…CMST), 115 to 154 (THKD…ALTA), 166 to 205 (GNKD…KLMK), 208 to 247 (GHTD…CIAT), 250 to 289 (VHDE…IRVL), 292 to 334 (EEKA…NFRA), and 358 to 397 (KGGA…KVED). Position 214 is an N6-acetyllysine (lysine 214). Lysine 578 carries the N6-acetyllysine modification. The disordered stretch occupies residues 607–628 (LDNESQTTSSSNNEKPEQEKEE). Residues 609 to 619 (NESQTTSSSNN) are compositionally biased toward low complexity. Threonine 613 is modified (phosphothreonine).

The protein belongs to the WD repeat WDR48 family. Interacts with USP46. Interacts with USP1. Interacts with USP12. Component of the USP12-WDR20-WDR48 deubiquitinating complex. Component of the USP12-DMWD-WDR48 deubiquitinating complex. Interacts with PHLPP1. Interacts with RAD51AP1; the interaction is direct and promotes formation of a trimeric complex with RAD51 via RAD51AP1. Interacts with ATAD5; the interaction regulates USP1-mediated PCNA deubiquitination. Interacts with RAD51; the interaction is enhanced under replication stress. Interacts with ITCH; the interaction is more efficient when both USP12 and WDR48/UAF1 are involved and may facilitate recruitment of the USP12 deubiquitinating complex to Notch.

It localises to the nucleus. The protein localises to the cytoplasm. It is found in the lysosome. Its subcellular location is the late endosome. Functionally, regulator of deubiquitinating complexes, which acts as a strong activator of USP1, USP12 and USP46. Enhances the USP1-mediated deubiquitination of FANCD2; USP1 being almost inactive by itself. Activates deubiquitination by increasing the catalytic turnover without increasing the affinity of deubiquitinating enzymes for the substrate. Also activates deubiquitinating activity of complexes containing USP12. Docks at the distal end of the USP12 fingers domain and induces a cascade of structural changes leading to the activation of the enzyme. Together with RAD51AP1, promotes DNA repair by stimulating RAD51-mediated homologous recombination. Binds single-stranded DNA (ssDNA) and double-stranded DNA (dsDNA). DNA-binding is required both for USP1-mediated deubiquitination of FANCD2 and stimulation of RAD51-mediated homologous recombination: both WDR48/UAF1 and RAD51AP1 have coordinated role in DNA-binding during these processes. Together with ATAD5 and by regulating USP1 activity, has a role in PCNA-mediated translesion synthesis (TLS) by deubiquitinating monoubiquitinated PCNA. Together with ATAD5, has a role in recruiting RAD51 to stalled forks during replication stress. The polypeptide is WD repeat-containing protein 48 (Wdr48) (Mus musculus (Mouse)).